The chain runs to 266 residues: Phosphonates import ATP-binding protein PhnC (266 aa).

The ABC transporter domain occupies 2 to 246 (IEIKNVSKTY…KFAEIYGRPI (245 aa)). ATP is bound at residue 35–42 (GLSGAGKS).

This sequence belongs to the ABC transporter superfamily. Phosphonates importer (TC 3.A.1.9.1) family. In terms of assembly, the complex is composed of two ATP-binding proteins (PhnC), two transmembrane proteins (PhnE) and a solute-binding protein (PhnD).

The protein resides in the cell membrane. It carries out the reaction phosphonate(out) + ATP + H2O = phosphonate(in) + ADP + phosphate + H(+). Its function is as follows. Part of the ABC transporter complex PhnCDE involved in phosphonates import. Responsible for energy coupling to the transport system. This Shouchella clausii (strain KSM-K16) (Alkalihalobacillus clausii) protein is Phosphonates import ATP-binding protein PhnC.